A 462-amino-acid chain; its full sequence is UDP-N-acetylmuramate--L-alanine ligase (462 aa).

ATP is bound at residue 112–118 (GTHGKTT).

This sequence belongs to the MurCDEF family.

It localises to the cytoplasm. It catalyses the reaction UDP-N-acetyl-alpha-D-muramate + L-alanine + ATP = UDP-N-acetyl-alpha-D-muramoyl-L-alanine + ADP + phosphate + H(+). It functions in the pathway cell wall biogenesis; peptidoglycan biosynthesis. Cell wall formation. This is UDP-N-acetylmuramate--L-alanine ligase from Geobacter sulfurreducens (strain ATCC 51573 / DSM 12127 / PCA).